We begin with the raw amino-acid sequence, 126 residues long: Large ribosomal subunit protein bL19 (126 aa).

The protein belongs to the bacterial ribosomal protein bL19 family.

Its function is as follows. This protein is located at the 30S-50S ribosomal subunit interface and may play a role in the structure and function of the aminoacyl-tRNA binding site. This Bradyrhizobium diazoefficiens (strain JCM 10833 / BCRC 13528 / IAM 13628 / NBRC 14792 / USDA 110) protein is Large ribosomal subunit protein bL19.